A 243-amino-acid polypeptide reads, in one-letter code: MKDILLGVNVDHIATLRQARGTSYPDPAHAASVAEHAGADGITIHLREDRRHIQDRDVYVMAKTIQTRMNLETAVTDEMINIALEVKPEYVCLVPEKREELTTEGGLDVAGNLEKITAATKTLSDAGIKVSLFIDADKAQLDAAKATGAPYVEIHTGAYADATTDEAISKELEHIRQGVKYAASIGLIVNAGHGLHYHNVKPIAAMEEIYELNIGHAIIARAAIDGLDKAVRDMKRLMLEARA.

N9 lines the 3-amino-2-oxopropyl phosphate pocket. Position 11–12 (11–12 (DH)) interacts with 1-deoxy-D-xylulose 5-phosphate. R20 contacts 3-amino-2-oxopropyl phosphate. The Proton acceptor role is filled by H45. Residues R47 and H52 each contribute to the 1-deoxy-D-xylulose 5-phosphate site. E72 acts as the Proton acceptor in catalysis. T102 is a binding site for 1-deoxy-D-xylulose 5-phosphate. The active-site Proton donor is H193. Residues G194 and 215–216 (GH) each bind 3-amino-2-oxopropyl phosphate.

It belongs to the PNP synthase family. As to quaternary structure, homooctamer; tetramer of dimers.

It localises to the cytoplasm. It catalyses the reaction 3-amino-2-oxopropyl phosphate + 1-deoxy-D-xylulose 5-phosphate = pyridoxine 5'-phosphate + phosphate + 2 H2O + H(+). It participates in cofactor biosynthesis; pyridoxine 5'-phosphate biosynthesis; pyridoxine 5'-phosphate from D-erythrose 4-phosphate: step 5/5. Functionally, catalyzes the complicated ring closure reaction between the two acyclic compounds 1-deoxy-D-xylulose-5-phosphate (DXP) and 3-amino-2-oxopropyl phosphate (1-amino-acetone-3-phosphate or AAP) to form pyridoxine 5'-phosphate (PNP) and inorganic phosphate. This is Pyridoxine 5'-phosphate synthase from Pseudoalteromonas translucida (strain TAC 125).